Here is a 65-residue protein sequence, read N- to C-terminus: Small ribosomal subunit protein bS21 (65 aa).

The segment covering 43–52 (EKKRVKEALA) has biased composition (basic and acidic residues). Positions 43 to 65 (EKKRVKEALARKRSRKKARKEQD) are disordered. Residues 53-65 (RKRSRKKARKEQD) are compositionally biased toward basic residues.

It belongs to the bacterial ribosomal protein bS21 family.

The protein is Small ribosomal subunit protein bS21 of Koribacter versatilis (strain Ellin345).